Here is a 339-residue protein sequence, read N- to C-terminus: UDP-N-acetylenolpyruvoylglucosamine reductase (339 aa).

One can recognise an FAD-binding PCMH-type domain in the interval 19-189 (VDVQARLFAQ…LRVRFKLSRE (171 aa)). The active site involves Arg166. Ser239 (proton donor) is an active-site residue. Glu335 is a catalytic residue.

This sequence belongs to the MurB family. It depends on FAD as a cofactor.

It is found in the cytoplasm. It carries out the reaction UDP-N-acetyl-alpha-D-muramate + NADP(+) = UDP-N-acetyl-3-O-(1-carboxyvinyl)-alpha-D-glucosamine + NADPH + H(+). Its pathway is cell wall biogenesis; peptidoglycan biosynthesis. Functionally, cell wall formation. This Pseudomonas syringae pv. tomato (strain ATCC BAA-871 / DC3000) protein is UDP-N-acetylenolpyruvoylglucosamine reductase.